Reading from the N-terminus, the 771-residue chain is Probable aconitate hydratase, mitochondrial (771 aa).

Substrate-binding positions include Q86 and 179-181 (DSH). The [4Fe-4S] cluster site is built by C372, C435, and C438. Residues R461, R466, R594, and 657–658 (SR) each bind substrate.

It belongs to the aconitase/IPM isomerase family. In terms of assembly, monomer. Requires [4Fe-4S] cluster as cofactor.

It is found in the mitochondrion. It catalyses the reaction citrate = D-threo-isocitrate. Its pathway is carbohydrate metabolism; tricarboxylic acid cycle; isocitrate from oxaloacetate: step 2/2. In terms of biological role, catalyzes the isomerization of citrate to isocitrate via cis-aconitate. This is Probable aconitate hydratase, mitochondrial (aco2) from Dictyostelium discoideum (Social amoeba).